The sequence spans 336 residues: Protein-glutamate methylesterase/protein-glutamine glutaminase 3 (336 aa).

The 118-residue stretch at lysine 2–leucine 119 folds into the Response regulatory domain. Aspartate 53 is modified (4-aspartylphosphate). In terms of domain architecture, CheB-type methylesterase spans proline 147–glutamine 336. Active-site residues include serine 159, histidine 186, and aspartate 279.

The protein belongs to the CheB family. Post-translationally, phosphorylated by CheA. Phosphorylation of the N-terminal regulatory domain activates the methylesterase activity.

It localises to the cytoplasm. The enzyme catalyses [protein]-L-glutamate 5-O-methyl ester + H2O = L-glutamyl-[protein] + methanol + H(+). It carries out the reaction L-glutaminyl-[protein] + H2O = L-glutamyl-[protein] + NH4(+). Involved in chemotaxis. Part of a chemotaxis signal transduction system that modulates chemotaxis in response to various stimuli. Catalyzes the demethylation of specific methylglutamate residues introduced into the chemoreceptors (methyl-accepting chemotaxis proteins or MCP) by CheR. Also mediates the irreversible deamidation of specific glutamine residues to glutamic acid. The sequence is that of Protein-glutamate methylesterase/protein-glutamine glutaminase 3 from Pseudomonas savastanoi pv. phaseolicola (strain 1448A / Race 6) (Pseudomonas syringae pv. phaseolicola (strain 1448A / Race 6)).